Here is a 535-residue protein sequence, read N- to C-terminus: Peptide chain release factor 3 (535 aa).

The tr-type G domain occupies 8–278; it reads ARRRTFAIIS…VDQAPAPGPR (271 aa). Residues 17–24, 85–89, and 139–142 contribute to the GTP site; these read SHPDAGKT, DTPGH, and NKLD.

Belongs to the TRAFAC class translation factor GTPase superfamily. Classic translation factor GTPase family. PrfC subfamily.

It localises to the cytoplasm. Increases the formation of ribosomal termination complexes and stimulates activities of RF-1 and RF-2. It binds guanine nucleotides and has strong preference for UGA stop codons. It may interact directly with the ribosome. The stimulation of RF-1 and RF-2 is significantly reduced by GTP and GDP, but not by GMP. This Bordetella bronchiseptica (strain ATCC BAA-588 / NCTC 13252 / RB50) (Alcaligenes bronchisepticus) protein is Peptide chain release factor 3.